The sequence spans 219 residues: Uracil phosphoribosyltransferase 1 (219 aa).

Residues Arg-33, Arg-42, and 76-79 (DGRI) each bind GTP. Arg-86 lines the 5-phospho-alpha-D-ribose 1-diphosphate pocket. Position 103 (Arg-103) interacts with GTP. Arg-111 is a 5-phospho-alpha-D-ribose 1-diphosphate binding site. Residue Arg-132 participates in GTP binding. 5-phospho-alpha-D-ribose 1-diphosphate is bound by residues Asp-138 and 138-146 (DPMLATGGS). D-ribose 5-phosphate is bound at residue Tyr-202. Residues Ile-203 and 208–210 (GDF) each bind uracil. Asp-209 contributes to the 5-phospho-alpha-D-ribose 1-diphosphate binding site.

Belongs to the UPRTase family. Mg(2+) is required as a cofactor.

The enzyme catalyses UMP + diphosphate = 5-phospho-alpha-D-ribose 1-diphosphate + uracil. The protein operates within pyrimidine metabolism; UMP biosynthesis via salvage pathway; UMP from uracil: step 1/1. Allosterically activated by GTP. Functionally, catalyzes the conversion of uracil and 5-phospho-alpha-D-ribose 1-diphosphate (PRPP) to UMP and diphosphate. This chain is Uracil phosphoribosyltransferase 1, found in Schizosaccharomyces pombe (strain 972 / ATCC 24843) (Fission yeast).